A 339-amino-acid chain; its full sequence is Ketol-acid reductoisomerase (NADP(+)) (339 aa).

One can recognise a KARI N-terminal Rossmann domain in the interval 1–182 (MRVYYDRDAD…GGGRAGIIET (182 aa)). NADP(+) contacts are provided by residues 24-27 (YGSQ), Arg48, Ser51, Thr53, and 83-86 (DELQ). His108 is a catalytic residue. Residue Gly134 participates in NADP(+) binding. The 146-residue stretch at 183–328 (TFKEECETDL…AKLRGMMPWI (146 aa)) folds into the KARI C-terminal knotted domain. Residues Asp191, Glu195, Glu227, and Glu231 each coordinate Mg(2+). Residue Ser252 participates in substrate binding.

It belongs to the ketol-acid reductoisomerase family. The cofactor is Mg(2+).

It catalyses the reaction (2R)-2,3-dihydroxy-3-methylbutanoate + NADP(+) = (2S)-2-acetolactate + NADPH + H(+). The catalysed reaction is (2R,3R)-2,3-dihydroxy-3-methylpentanoate + NADP(+) = (S)-2-ethyl-2-hydroxy-3-oxobutanoate + NADPH + H(+). It functions in the pathway amino-acid biosynthesis; L-isoleucine biosynthesis; L-isoleucine from 2-oxobutanoate: step 2/4. Its pathway is amino-acid biosynthesis; L-valine biosynthesis; L-valine from pyruvate: step 2/4. Functionally, involved in the biosynthesis of branched-chain amino acids (BCAA). Catalyzes an alkyl-migration followed by a ketol-acid reduction of (S)-2-acetolactate (S2AL) to yield (R)-2,3-dihydroxy-isovalerate. In the isomerase reaction, S2AL is rearranged via a Mg-dependent methyl migration to produce 3-hydroxy-3-methyl-2-ketobutyrate (HMKB). In the reductase reaction, this 2-ketoacid undergoes a metal-dependent reduction by NADPH to yield (R)-2,3-dihydroxy-isovalerate. This chain is Ketol-acid reductoisomerase (NADP(+)), found in Methylorubrum populi (strain ATCC BAA-705 / NCIMB 13946 / BJ001) (Methylobacterium populi).